A 407-amino-acid polypeptide reads, in one-letter code: Putative F-box protein At2g16220 (407 aa).

Positions 1-45 (MNSHFLTNDLILEVLSRLPLKSVARFHCVSKRWASMFGSPYFKEL) constitute an F-box domain. The tract at residues 385–407 (PPSVQPEYDESDSESEEDREIII) is disordered. Positions 391–407 (EYDESDSESEEDREIII) are enriched in acidic residues.

In Arabidopsis thaliana (Mouse-ear cress), this protein is Putative F-box protein At2g16220.